The following is a 600-amino-acid chain: Proton channel OTOP1 (600 aa).

The disordered stretch occupies residues 1-50; that stretch reads MPGGPGAPSSPAASSGSSRAAPSGIAACPLSPPPLARGSPQASGPRRGAS. The Cytoplasmic portion of the chain corresponds to 1–56; the sequence is MPGGPGAPSSPAASSGSSRAAPSGIAACPLSPPPLARGSPQASGPRRGASVPQKLA. A compositionally biased stretch (low complexity) spans 7 to 27; sequence APSSPAASSGSSRAAPSGIAA. A helical membrane pass occupies residues 57–78; sequence ETLSSQYGLNVFVAGLLFLLAW. At 79-86 the chain is on the extracellular side; the sequence is AVHATGVG. A helical transmembrane segment spans residues 87 to 110; that stretch reads KSDLLCVLTALMLLQLLWMLWYVG. The Cytoplasmic segment spans residues 111 to 128; it reads RSYMQRRLIRPKDTHAGA. Residues 129 to 151 traverse the membrane as a helical segment; it reads RWLRGSITLFAFITVVLGCLKVA. Topologically, residues 152 to 161 are extracellular; sequence YFIGFSECLS. A helical membrane pass occupies residues 162 to 186; that stretch reads ATEGVFPVTHAVHTLLQVYFLWGHA. The Cytoplasmic portion of the chain corresponds to 187–194; that stretch reads KDIIMSFK. Residues 195–217 traverse the membrane as a helical segment; sequence TLERFGVIHSVFTNLLLWANSVL. The Extracellular portion of the chain corresponds to 218 to 262; sequence NESKHQLNEHKERLITLGFGNITIVLDDHTPQCNCTPPALCSALS. A helical membrane pass occupies residues 263-288; the sequence is HGIYYLYPFNIEYQILASTMLYVLWK. The Cytoplasmic segment spans residues 289-309; that stretch reads NIGRRVDSSQHQKMQCRFDGV. The chain crosses the membrane as a helical span at residues 310–332; sequence LVGSVLGLTVLAATIAVVVVYMI. At 333 to 342 the chain is on the extracellular side; sequence HIGRSKSKSE. Residues 343-368 form a helical membrane-spanning segment; that stretch reads SALIMFYLYAITVLLLMGAAGLVGSW. Residues 369–386 are Cytoplasmic-facing; the sequence is IYRVDEKSLDESKNPARK. The helical transmembrane segment at 387–411 threads the bilayer; it reads LDVDLLVATGSGSWLLSWGSILAIA. Residues 412-421 are Extracellular-facing; sequence CAETRPPYTW. The helical transmembrane segment at 422–442 threads the bilayer; that stretch reads YNLPYSVLVIVEKYVQNIFII. Over 443–532 the chain is Cytoplasmic; it reads ESVHLEPEGV…QGGMKRRLLR (90 aa). A helical transmembrane segment spans residues 533–551; the sequence is NITAFLFLCNISLWIPPAF. Residues 552–569 lie on the Extracellular side of the membrane; it reads GCRPEYDNGLEEIVFGFE. A helical transmembrane segment spans residues 570–593; the sequence is PWIIVVNLAMPFSIFYRMHAAAAL. At 594–600 the chain is on the cytoplasmic side; sequence FEVYCKI.

It belongs to the otopetrin family. As to quaternary structure, homodimer. Interacts with STAT1, independently of STAT1 phosphorylation status. Expressed in thymus, heart, kidney, skin, vestibular system of the inner ear, sour taste cells, heart, uterus, dorsal root ganglion, adrenal gland, lactating mammary gland and stimulated mast cells. In the inner ear, expressed in the supporting cells in extrastriolar regions of the saccule and in the utricle, but not in the cochlea. Expressed in brown adipose tissue. Expressed in epididymal white adipose tissue (eWAT), as well as in inguinal fat, in obese animals, but hardly detectable in eWAT from lean mice. Expressed in acid-sensing taste receptor cells (PKD2L1-positive cells), but not in other types of taste cells (at protein level).

The protein resides in the cell membrane. Its subcellular location is the cell projection. It localises to the microvillus. The catalysed reaction is H(+)(in) = H(+)(out). With respect to regulation, activated by both acid and alkali, with proton influx in response to extracellular acid and proton efflux during alkali stimulation. Inhibited by Zn(2+); this inhibition is thought to be pH-sensitive. Currents evoked in response to mild acid (pH 6.0) stimulus may also be mildly potentiated by exposure to Zn(2+). Activated by NH(4)Cl. Its function is as follows. Proton-selective ion channel. Biphasically modulated by acid and alkali, mediating proton influx and efflux in response to extracellular acid and base stimulation, respectively. Sour taste receptor, which carries inward currents in response to extracellular acidification. Sensor for ammonium chloride (NH(4)Cl) in taste receptor cells. NH(4)Cl acts by increasing the intracellular pH, thereby generating a driving force for proton entry through OTOP1 channel. Might also participate in alkaline sensation. Plays a role in the regulation of Ca(2+) flux in response to purigenic (ATP, ADP and UDP) stimuli, leading to increase in cytosolic Ca(2+) due to influx of extracellular calcium. May play this role by inhibiting P2Y purinoceptor-mediated Ca(2+) release in a Ca(2+)-dependent manner and promote an influx of Ca(2+) in response to ATP. Through this mechanism and possibly others, plays a role in the formation and function of calcium carbonate-based structures in the vestibular system of the inner ear, called otoconia, that sense gravity and linear acceleration. In obesity, may attenuate adipose tissue inflammation, through the negative regulation of IFNG signaling, hence may play an adaptive role in the maintainance of metabolic homeostasis. Following alkali activation, may also be permeable Na(+), K(+), Cs(+) and Li(+). In Mus musculus (Mouse), this protein is Proton channel OTOP1.